A 747-amino-acid chain; its full sequence is Polyribonucleotide nucleotidyltransferase (747 aa).

Mg(2+)-binding residues include Asp-487 and Asp-493. One can recognise a KH domain in the interval Pro-554–Ile-613. In terms of domain architecture, S1 motif spans Gly-623–Lys-691. The segment at Lys-691 to Asn-747 is disordered. The span at Ser-699–Lys-712 shows a compositional bias: low complexity. Over residues Glu-730–Val-739 the composition is skewed to polar residues.

It belongs to the polyribonucleotide nucleotidyltransferase family. Requires Mg(2+) as cofactor.

It is found in the cytoplasm. It carries out the reaction RNA(n+1) + phosphate = RNA(n) + a ribonucleoside 5'-diphosphate. Its function is as follows. Involved in mRNA degradation. Catalyzes the phosphorolysis of single-stranded polyribonucleotides processively in the 3'- to 5'-direction. This Rickettsia akari (strain Hartford) protein is Polyribonucleotide nucleotidyltransferase.